The primary structure comprises 509 residues: Aspartyl/glutamyl-tRNA(Asn/Gln) amidotransferase subunit B (509 aa).

This sequence belongs to the GatB/GatE family. GatB subfamily. Heterotrimer of A, B and C subunits.

The catalysed reaction is L-glutamyl-tRNA(Gln) + L-glutamine + ATP + H2O = L-glutaminyl-tRNA(Gln) + L-glutamate + ADP + phosphate + H(+). It catalyses the reaction L-aspartyl-tRNA(Asn) + L-glutamine + ATP + H2O = L-asparaginyl-tRNA(Asn) + L-glutamate + ADP + phosphate + 2 H(+). In terms of biological role, allows the formation of correctly charged Asn-tRNA(Asn) or Gln-tRNA(Gln) through the transamidation of misacylated Asp-tRNA(Asn) or Glu-tRNA(Gln) in organisms which lack either or both of asparaginyl-tRNA or glutaminyl-tRNA synthetases. The reaction takes place in the presence of glutamine and ATP through an activated phospho-Asp-tRNA(Asn) or phospho-Glu-tRNA(Gln). In Psychrobacter cryohalolentis (strain ATCC BAA-1226 / DSM 17306 / VKM B-2378 / K5), this protein is Aspartyl/glutamyl-tRNA(Asn/Gln) amidotransferase subunit B.